We begin with the raw amino-acid sequence, 319 residues long: tRNA N6-adenosine threonylcarbamoyltransferase (319 aa).

Positions 110 and 114 each coordinate Fe cation. Residues 135–139 (VVSGG), Asp-168, Gly-181, Asp-185, and Asn-277 contribute to the substrate site. Fe cation is bound at residue Asp-301.

This sequence belongs to the KAE1 / TsaD family. Requires Fe(2+) as cofactor.

It localises to the cytoplasm. It catalyses the reaction L-threonylcarbamoyladenylate + adenosine(37) in tRNA = N(6)-L-threonylcarbamoyladenosine(37) in tRNA + AMP + H(+). Its function is as follows. Required for the formation of a threonylcarbamoyl group on adenosine at position 37 (t(6)A37) in tRNAs that read codons beginning with adenine. Is involved in the transfer of the threonylcarbamoyl moiety of threonylcarbamoyl-AMP (TC-AMP) to the N6 group of A37, together with TsaE and TsaB. TsaD likely plays a direct catalytic role in this reaction. The sequence is that of tRNA N6-adenosine threonylcarbamoyltransferase from Mycoplasma pneumoniae (strain ATCC 29342 / M129 / Subtype 1) (Mycoplasmoides pneumoniae).